The sequence spans 80 residues: Large ribosomal subunit protein uL24 (80 aa).

Residues 53 to 80 are disordered; it reads HMRPTQSNPQGSIIEREFPIHASNVKKS.

The protein belongs to the universal ribosomal protein uL24 family. In terms of assembly, part of the 50S ribosomal subunit.

In terms of biological role, one of two assembly initiator proteins, it binds directly to the 5'-end of the 23S rRNA, where it nucleates assembly of the 50S subunit. One of the proteins that surrounds the polypeptide exit tunnel on the outside of the subunit. In Chlorobium luteolum (strain DSM 273 / BCRC 81028 / 2530) (Pelodictyon luteolum), this protein is Large ribosomal subunit protein uL24.